The following is a 248-amino-acid chain: Small ribosomal subunit protein uS2 (248 aa).

Belongs to the universal ribosomal protein uS2 family.

This is Small ribosomal subunit protein uS2 from Janthinobacterium sp. (strain Marseille) (Minibacterium massiliensis).